Here is a 204-residue protein sequence, read N- to C-terminus: N-(5'-phosphoribosyl)anthranilate isomerase (204 aa).

It belongs to the TrpF family.

The catalysed reaction is N-(5-phospho-beta-D-ribosyl)anthranilate = 1-(2-carboxyphenylamino)-1-deoxy-D-ribulose 5-phosphate. It functions in the pathway amino-acid biosynthesis; L-tryptophan biosynthesis; L-tryptophan from chorismate: step 3/5. In Bacillus cereus (strain Q1), this protein is N-(5'-phosphoribosyl)anthranilate isomerase.